A 204-amino-acid chain; its full sequence is ATP phosphoribosyltransferase (204 aa).

The protein belongs to the ATP phosphoribosyltransferase family. Short subfamily. Heteromultimer composed of HisG and HisZ subunits.

It is found in the cytoplasm. The catalysed reaction is 1-(5-phospho-beta-D-ribosyl)-ATP + diphosphate = 5-phospho-alpha-D-ribose 1-diphosphate + ATP. The protein operates within amino-acid biosynthesis; L-histidine biosynthesis; L-histidine from 5-phospho-alpha-D-ribose 1-diphosphate: step 1/9. In terms of biological role, catalyzes the condensation of ATP and 5-phosphoribose 1-diphosphate to form N'-(5'-phosphoribosyl)-ATP (PR-ATP). Has a crucial role in the pathway because the rate of histidine biosynthesis seems to be controlled primarily by regulation of HisG enzymatic activity. This is ATP phosphoribosyltransferase from Staphylococcus aureus (strain USA300).